A 437-amino-acid chain; its full sequence is 5-hydroxytryptamine receptor 3B (437 aa).

A signal peptide spans 1–21 (MILLWSCLLVAVVGILGTATP). The Extracellular segment spans residues 22–235 (QPGNSSLHRL…RFNVVIRRCP (214 aa)). Residues asparagine 25, asparagine 92, and asparagine 134 are each glycosylated (N-linked (GlcNAc...) asparagine). A disulfide bridge connects residues cysteine 151 and cysteine 165. The chain crosses the membrane as a helical span at residues 236–255 (LAYVVSLLIPSIFLMLVDLG). Over 256 to 266 (SFYLPPNCRAR) the chain is Cytoplasmic. Residues 267-284 (IVFKTNVLVGYTVFRVNM) form a helical membrane-spanning segment. The Extracellular segment spans residues 285 to 295 (SDEVPRSAGCT). The helical transmembrane segment at 296–324 (SLIGVFFTVCMALLVLSLSKSILLIKFLY) threads the bilayer. The Cytoplasmic portion of the chain corresponds to 325–410 (EERHSEQERP…WLAILCHFDQ (86 aa)). Positions 377-409 (FWFQLQSINNSLRTRDQVYQKEVEWLAILCHFD) are HA-stretch; determines single-channel conductance in 5-HT3 receptors. The chain crosses the membrane as a helical span at residues 411–434 (LLFRIYLAVLGLYTVTLCSLWALW). The Extracellular portion of the chain corresponds to 435 to 437 (SRM).

This sequence belongs to the ligand-gated ion channel (TC 1.A.9) family. 5-hydroxytryptamine receptor (TC 1.A.9.2) subfamily. HTR3B sub-subfamily. Forms homopentameric as well as heteropentameric serotonin-activated cation-selective channel complexes with HTR3A. The homomeric complex is not functional. Heteropentameric complexes display properties which resemble that of neuronal serotonin-activated channels in vivo. N-glycosylation is required for membrane localization. As to expression, expressed in peripheral neurons, but not in neurons of the central nervous system.

It is found in the postsynaptic cell membrane. The protein localises to the cell membrane. The catalysed reaction is Na(+)(in) = Na(+)(out). The enzyme catalyses K(+)(in) = K(+)(out). It catalyses the reaction Ca(2+)(in) = Ca(2+)(out). In terms of biological role, forms serotonin (5-hydroxytryptamine/5-HT3)-activated cation-selective channel complexes, which when activated cause fast, depolarizing responses in neurons. The chain is 5-hydroxytryptamine receptor 3B from Rattus norvegicus (Rat).